The chain runs to 208 residues: Guanylate kinase (208 aa).

Residues 4 to 182 (GQLYIISAPS…ALEELKSVFR (179 aa)) form the Guanylate kinase-like domain. Position 11–18 (11–18 (APSGAGKT)) interacts with ATP.

This sequence belongs to the guanylate kinase family.

Its subcellular location is the cytoplasm. It carries out the reaction GMP + ATP = GDP + ADP. Its function is as follows. Essential for recycling GMP and indirectly, cGMP. This chain is Guanylate kinase, found in Hahella chejuensis (strain KCTC 2396).